The primary structure comprises 491 residues: Glutamyl-tRNA(Gln) amidotransferase subunit A (491 aa).

Residues lysine 78 and serine 158 each act as charge relay system in the active site. Residue serine 182 is the Acyl-ester intermediate of the active site.

The protein belongs to the amidase family. GatA subfamily. In terms of assembly, heterotrimer of A, B and C subunits.

The catalysed reaction is L-glutamyl-tRNA(Gln) + L-glutamine + ATP + H2O = L-glutaminyl-tRNA(Gln) + L-glutamate + ADP + phosphate + H(+). Its function is as follows. Allows the formation of correctly charged Gln-tRNA(Gln) through the transamidation of misacylated Glu-tRNA(Gln) in organisms which lack glutaminyl-tRNA synthetase. The reaction takes place in the presence of glutamine and ATP through an activated gamma-phospho-Glu-tRNA(Gln). In Nitrobacter hamburgensis (strain DSM 10229 / NCIMB 13809 / X14), this protein is Glutamyl-tRNA(Gln) amidotransferase subunit A.